The sequence spans 1011 residues: PE-PGRS family protein PE_PGRS30 (1011 aa).

Residues 1–93 (MSFLLVEPDL…AAAYTGAEAA (93 aa)) form the PE domain. Residues 130-696 (SNAGGNGGPG…GGTGGTGGVL (567 aa)) are PGRS domain. Gly residues predominate over residues 595–696 (GGAGGTGGDH…GGTGGTGGVL (102 aa)). The tract at residues 595-701 (GGAGGTGGDH…TGGVLFGQSG (107 aa)) is disordered. Residues 697–1011 (FGQSGSSGPP…PTQLAQAIAP (315 aa)) are C-terminal domain.

It belongs to the mycobacterial PE family. PGRS subfamily.

The protein resides in the secreted. It localises to the cell wall. Its subcellular location is the cell surface. Functionally, mediates suppression of pro-inflammatory immune response in macrophages via modulation of host cytokine response. Required for full virulence. Involved in inhibition of phago-lysosome fusion. This is PE-PGRS family protein PE_PGRS30 from Mycobacterium tuberculosis (strain ATCC 25618 / H37Rv).